Reading from the N-terminus, the 465-residue chain is Antithrombin-III (465 aa).

An N-terminal signal peptide occupies residues 1-32; that stretch reads MISNGIGTVTAGKRSICLLPLLLIGLWGCVTC. Intrachain disulfides connect Cys41-Cys161 and Cys54-Cys128. Thr64 carries the phosphothreonine modification. Phosphoserine is present on Ser69. Trp82 lines the heparin pocket. Asn129 carries an N-linked (GlcNAc...) asparagine glycan. Arg162 contributes to the heparin binding site. A glycan (N-linked (GlcNAc...) asparagine) is linked at Asn168. Arg178 serves as a coordination point for heparin. Residues Asn188 and Asn225 are each glycosylated (N-linked (GlcNAc...) asparagine). A disulfide bridge links Cys280 with Cys463.

This sequence belongs to the serpin family. In terms of assembly, forms protease inhibiting heterodimer with TMPRSS7. Post-translationally, phosphorylated by FAM20C in the extracellular medium. As to expression, plasma.

It is found in the secreted. Its subcellular location is the extracellular space. Its function is as follows. Most important serine protease inhibitor in plasma that regulates the blood coagulation cascade. AT-III inhibits thrombin, matriptase-3/TMPRSS7, as well as factors IXa, Xa and XIa. Its inhibitory activity is greatly enhanced in the presence of heparin. The sequence is that of Antithrombin-III (SERPINC1) from Bos taurus (Bovine).